A 293-amino-acid polypeptide reads, in one-letter code: MEEPSGAQLLGPVEIRALAEKLDVTPTKKLGQNFVHDPNTVRRIVAAAELTPDDHVVEVGPGLGSLTLALVESAASVTAVEIDPRLAAELPETFQWRAPALAHKLSIVLKDALKVQQSDMAVQPTALVANLPYNVSVPVLLHMMEEFPTINKVLVMVQAEVADRLAADPGSKIYGVPSVKASFYGPVTRAGSIGKNVFWPAPKIESGLVKIVREDTAWKQDDETRKKVWPIIDAAFLQRRKTLRAALSGHYGSGQAAEEALRAADIDPTLRGEKLDVTDYVRLAGVLQQKDEK.

6 residues coordinate S-adenosyl-L-methionine: N33, V35, G60, E81, D111, and N130.

Belongs to the class I-like SAM-binding methyltransferase superfamily. rRNA adenine N(6)-methyltransferase family. RsmA subfamily.

The protein localises to the cytoplasm. The enzyme catalyses adenosine(1518)/adenosine(1519) in 16S rRNA + 4 S-adenosyl-L-methionine = N(6)-dimethyladenosine(1518)/N(6)-dimethyladenosine(1519) in 16S rRNA + 4 S-adenosyl-L-homocysteine + 4 H(+). Functionally, specifically dimethylates two adjacent adenosines (A1518 and A1519) in the loop of a conserved hairpin near the 3'-end of 16S rRNA in the 30S particle. May play a critical role in biogenesis of 30S subunits. The protein is Ribosomal RNA small subunit methyltransferase A of Corynebacterium glutamicum (strain ATCC 13032 / DSM 20300 / JCM 1318 / BCRC 11384 / CCUG 27702 / LMG 3730 / NBRC 12168 / NCIMB 10025 / NRRL B-2784 / 534).